The primary structure comprises 132 residues: uncharacterized protein (132 aa).

A Glycyl lysine isopeptide (Lys-Gly) (interchain with G-Cter in SAMP2) cross-link involves residue lysine 59.

It belongs to the OsmC/Ohr family.

This is an uncharacterized protein from Haloferax volcanii (strain ATCC 29605 / DSM 3757 / JCM 8879 / NBRC 14742 / NCIMB 2012 / VKM B-1768 / DS2) (Halobacterium volcanii).